Here is a 529-residue protein sequence, read N- to C-terminus: Listeriolysin O (529 aa).

The N-terminal stretch at 1–24 is a signal peptide; that stretch reads MKKIMLVFITLILVSLPIAQQTEA. 4 beta stranded membrane-spanning segments follow: residues 214–227, 234–243, 312–321, and 329–341; these read ESQLIAKFGTAFKA, VNFGAISEGK, STKVKAAFDA, and SGDVELTNIIKNS. Positions 483-493 match the Conserved undecapeptide motif; it reads ECTGLAWEWWR. The short motif at 515-516 is the Cholesterol binding element; it reads TL.

It belongs to the cholesterol-dependent cytolysin family. Homooligomeric pore complex of 35 to 50 subunits; when inserted in the host membrane.

Its subcellular location is the secreted. It is found in the host membrane. It localises to the host cell membrane. With respect to regulation, activity of listeriolysin O is regulated on multiple levels. It should be high in the phagosome, thereby allowing escape of the bacteria from the phagosomal compartment. Then, once inside the host cytosol, the activity must be controlled to prevent lysis of the host plasma membrane and loss of the intracellular environment. In terms of biological role, a cholesterol-dependent toxin that causes cytolysis by forming pores in cholesterol containing host membranes. After binding to target membranes, the protein undergoes a major conformation change, leading to its insertion in the host membrane and formation of an oligomeric pore complex. Cholesterol is required for binding to host membranes, membrane insertion and pore formation; cholesterol binding is mediated by a Thr-Leu pair in the C-terminus. Acts as a major virulence factor required for the escape of bacteria from phagosomal vacuoles and entry into the host cytosol. Can be reversibly inactivated by oxidation. The polypeptide is Listeriolysin O (hly) (Listeria monocytogenes serotype 4b (strain CLIP80459)).